A 474-amino-acid chain; its full sequence is tRNA-2-methylthio-N(6)-dimethylallyladenosine synthase (474 aa).

The MTTase N-terminal domain maps to 3-120 (KKLHIKTWGC…LPEMINSVRG (118 aa)). [4Fe-4S] cluster contacts are provided by Cys12, Cys49, Cys83, Cys157, Cys161, and Cys164. Residues 143 to 375 (RAEGPTAFVS…QERINQQAMA (233 aa)) enclose the Radical SAM core domain. The region spanning 378-441 (RRMLGTTQRI…PNSLRGKVVR (64 aa)) is the TRAM domain.

It belongs to the methylthiotransferase family. MiaB subfamily. As to quaternary structure, monomer. The cofactor is [4Fe-4S] cluster.

It is found in the cytoplasm. It carries out the reaction N(6)-dimethylallyladenosine(37) in tRNA + (sulfur carrier)-SH + AH2 + 2 S-adenosyl-L-methionine = 2-methylsulfanyl-N(6)-dimethylallyladenosine(37) in tRNA + (sulfur carrier)-H + 5'-deoxyadenosine + L-methionine + A + S-adenosyl-L-homocysteine + 2 H(+). Functionally, catalyzes the methylthiolation of N6-(dimethylallyl)adenosine (i(6)A), leading to the formation of 2-methylthio-N6-(dimethylallyl)adenosine (ms(2)i(6)A) at position 37 in tRNAs that read codons beginning with uridine. The protein is tRNA-2-methylthio-N(6)-dimethylallyladenosine synthase of Shigella boydii serotype 4 (strain Sb227).